A 280-amino-acid polypeptide reads, in one-letter code: Manganese import system permease protein ScaB (280 aa).

The next 8 helical transmembrane spans lie at 18-38 (ALIT…FIIL), 61-81 (ILGI…SILI), 94-114 (TAIG…IGVA), 139-159 (TIGV…PLLL), 174-194 (VKIY…TAMQ), 196-216 (VGTI…YLYA), 222-242 (MMLL…FIGY), and 246-266 (IAVG…SFFI).

It belongs to the ABC-3 integral membrane protein family.

Its subcellular location is the cell membrane. Part of an ABC transporter complex involved in manganese import. This Streptococcus parasanguinis protein is Manganese import system permease protein ScaB.